The primary structure comprises 979 residues: UPF0182 protein BCG_0095 (979 aa).

The next 7 helical transmembrane spans lie at 19–39 (LVTA…LVDI), 63–83 (LAIV…ALLL), 114–134 (LFGW…ASFD), 174–194 (WLFV…YLFG), 211–231 (VQLA…YWLD), 260–280 (KLVL…AIFL), and 288–308 (MAAA…PLLM). Residues 898-948 (GTGRVATAPGGDAASAPPPGAGGPAPPQAVPPPRTTQPPAAPPRGPDVPPA) form a disordered region. A compositionally biased stretch (low complexity) spans 902-912 (VATAPGGDAAS). Pro residues predominate over residues 913-946 (APPPGAGGPAPPQAVPPPRTTQPPAAPPRGPDVP).

This sequence belongs to the UPF0182 family.

The protein resides in the cell membrane. This Mycobacterium bovis (strain BCG / Pasteur 1173P2) protein is UPF0182 protein BCG_0095.